Consider the following 62-residue polypeptide: Large ribosomal subunit protein bL28 (62 aa).

The interval 1-22 (MGKQCFVTGRKASTGNRRSHAL) is disordered.

Belongs to the bacterial ribosomal protein bL28 family.

The sequence is that of Large ribosomal subunit protein bL28 from Staphylococcus aureus (strain N315).